Here is an 85-residue protein sequence, read N- to C-terminus: UPF0386 protein Atu1321 (85 aa).

The protein belongs to the UPF0386 family.

The sequence is that of UPF0386 protein Atu1321 from Agrobacterium fabrum (strain C58 / ATCC 33970) (Agrobacterium tumefaciens (strain C58)).